The sequence spans 282 residues: DNA-dependent metalloprotease WSS1 homolog 2 (282 aa).

One can recognise a Ubiquitin-like domain in the interval 1–75 (MELKFSCRGN…CLIRQDKDIV (75 aa)). The 176-residue stretch at 99-274 (PHTTPKPASI…LLAAAERRKQ (176 aa)) folds into the WLM domain. Residue His202 participates in Zn(2+) binding. The active site involves Glu203. His206 and His212 together coordinate Zn(2+). The disordered stretch occupies residues 234–282 (GKPGSYVSDRASYTPQQDNDDEDQKNHRRDLLLAAAERRKQSGSKVQKE). Residues 269 to 282 (AERRKQSGSKVQKE) show a composition bias toward basic and acidic residues.

This sequence belongs to the peptidase M3 family. WSS1-like metalloprotease (WLM) subfamily. Zn(2+) serves as cofactor.

It localises to the cytoplasm. The protein localises to the nucleus. In terms of biological role, metalloendopeptidase that acts selectively on DNA-binding proteins. DNA is needed to bring the protease and substrates together to enable proteolysis. Involved in the repair of toxic DNA-protein cross-links (DPCs) such as covalently trapped topoisomerase 1 (TOP1) adducts on DNA lesions or DPCs induced by reactive compounds such as formaldehyde. The polypeptide is DNA-dependent metalloprotease WSS1 homolog 2 (Schizosaccharomyces pombe (strain 972 / ATCC 24843) (Fission yeast)).